Here is a 78-residue protein sequence, read N- to C-terminus: Translation initiation factor IF-1, chloroplastic (78 aa).

Positions 1–72 constitute an S1-like domain; that stretch reads MKKQKLIDME…TKGRITYRFH (72 aa).

Belongs to the IF-1 family. Component of the 30S ribosomal translation pre-initiation complex which assembles on the 30S ribosome in the order IF-2 and IF-3, IF-1 and N-formylmethionyl-tRNA(fMet); mRNA recruitment can occur at any time during PIC assembly.

The protein resides in the plastid. The protein localises to the chloroplast. Its function is as follows. One of the essential components for the initiation of protein synthesis. Stabilizes the binding of IF-2 and IF-3 on the 30S subunit to which N-formylmethionyl-tRNA(fMet) subsequently binds. Helps modulate mRNA selection, yielding the 30S pre-initiation complex (PIC). Upon addition of the 50S ribosomal subunit IF-1, IF-2 and IF-3 are released leaving the mature 70S translation initiation complex. This chain is Translation initiation factor IF-1, chloroplastic, found in Huperzia lucidula (Shining clubmoss).